The chain runs to 258 residues: Cytochrome c oxidase subunit 2 (258 aa).

At methionine 1–aspartate 41 the chain is on the mitochondrial intermembrane side. A helical transmembrane segment spans residues isoleucine 42–valine 58. Residues arginine 59–glutamate 82 are Mitochondrial matrix-facing. A helical transmembrane segment spans residues isoleucine 83–leucine 104. The Mitochondrial intermembrane portion of the chain corresponds to tyrosine 105–serine 258. Cu cation contacts are provided by histidine 187, cysteine 222, glutamate 224, cysteine 226, histidine 230, and methionine 233. Mg(2+) is bound at residue glutamate 224.

The protein belongs to the cytochrome c oxidase subunit 2 family. Component of the cytochrome c oxidase (complex IV, CIV), a multisubunit enzyme composed of a catalytic core of 3 subunits and several supernumerary subunits. The complex exists as a monomer or a dimer and forms supercomplexes (SCs) in the inner mitochondrial membrane with ubiquinol-cytochrome c oxidoreductase (cytochrome b-c1 complex, complex III, CIII). The cofactor is Cu cation.

The protein resides in the mitochondrion inner membrane. It carries out the reaction 4 Fe(II)-[cytochrome c] + O2 + 8 H(+)(in) = 4 Fe(III)-[cytochrome c] + 2 H2O + 4 H(+)(out). Functionally, component of the cytochrome c oxidase, the last enzyme in the mitochondrial electron transport chain which drives oxidative phosphorylation. The respiratory chain contains 3 multisubunit complexes succinate dehydrogenase (complex II, CII), ubiquinol-cytochrome c oxidoreductase (cytochrome b-c1 complex, complex III, CIII) and cytochrome c oxidase (complex IV, CIV), that cooperate to transfer electrons derived from NADH and succinate to molecular oxygen, creating an electrochemical gradient over the inner membrane that drives transmembrane transport and the ATP synthase. Cytochrome c oxidase is the component of the respiratory chain that catalyzes the reduction of oxygen to water. Electrons originating from reduced cytochrome c in the intermembrane space (IMS) are transferred via the dinuclear copper A center (CU(A)) of subunit 2 and heme A of subunit 1 to the active site in subunit 1, a binuclear center (BNC) formed by heme A3 and copper B (CU(B)). The BNC reduces molecular oxygen to 2 water molecules using 4 electrons from cytochrome c in the IMS and 4 protons from the mitochondrial matrix. The polypeptide is Cytochrome c oxidase subunit 2 (COX2) (Oenothera berteroana (Bertero's evening primrose)).